The chain runs to 166 residues: Small ribosomal subunit protein uS5 (166 aa).

Residues 12-75 (YIEKLVQVNR…EAARRNMIQV (64 aa)) form the S5 DRBM domain.

It belongs to the universal ribosomal protein uS5 family. In terms of assembly, part of the 30S ribosomal subunit. Contacts proteins S4 and S8.

Functionally, with S4 and S12 plays an important role in translational accuracy. In terms of biological role, located at the back of the 30S subunit body where it stabilizes the conformation of the head with respect to the body. The chain is Small ribosomal subunit protein uS5 from Pseudomonas aeruginosa (strain LESB58).